A 638-amino-acid chain; its full sequence is 1-deoxy-D-xylulose-5-phosphate synthase (638 aa).

Thiamine diphosphate-binding positions include His72 and 113–115 (GHA). Asp144 contributes to the Mg(2+) binding site. Thiamine diphosphate is bound by residues 145 to 146 (GA), Asn174, Tyr289, and Glu372. Mg(2+) is bound at residue Asn174.

The protein belongs to the transketolase family. DXPS subfamily. In terms of assembly, homodimer. Mg(2+) is required as a cofactor. It depends on thiamine diphosphate as a cofactor.

It carries out the reaction D-glyceraldehyde 3-phosphate + pyruvate + H(+) = 1-deoxy-D-xylulose 5-phosphate + CO2. It participates in metabolic intermediate biosynthesis; 1-deoxy-D-xylulose 5-phosphate biosynthesis; 1-deoxy-D-xylulose 5-phosphate from D-glyceraldehyde 3-phosphate and pyruvate: step 1/1. Its function is as follows. Catalyzes the acyloin condensation reaction between C atoms 2 and 3 of pyruvate and glyceraldehyde 3-phosphate to yield 1-deoxy-D-xylulose-5-phosphate (DXP). This is 1-deoxy-D-xylulose-5-phosphate synthase from Gloeobacter violaceus (strain ATCC 29082 / PCC 7421).